Here is a 134-residue protein sequence, read N- to C-terminus: Small ribosomal subunit protein uS11 (134 aa).

Positions 113–122 (SSITDATPQP) are enriched in polar residues. The segment at 113–134 (SSITDATPQPHNGCRPTKRRKV) is disordered.

It belongs to the universal ribosomal protein uS11 family. In terms of assembly, part of the 30S ribosomal subunit. Interacts with proteins S7 and S18. Binds to IF-3.

In terms of biological role, located on the platform of the 30S subunit, it bridges several disparate RNA helices of the 16S rRNA. Forms part of the Shine-Dalgarno cleft in the 70S ribosome. The polypeptide is Small ribosomal subunit protein uS11 (Corynebacterium aurimucosum (strain ATCC 700975 / DSM 44827 / CIP 107346 / CN-1) (Corynebacterium nigricans)).